A 381-amino-acid chain; its full sequence is Beta-lactamase CMY-2 (381 aa).

The first 20 residues, 1–20 (MMKKSLCCALLLTASFSTFA), serve as a signal peptide directing secretion. Serine 84 serves as the catalytic Acyl-ester intermediate. A beta-lactam contacts are provided by serine 84, glutamine 140, tyrosine 170, and asparagine 172.

This sequence belongs to the class-C beta-lactamase family.

The enzyme catalyses a beta-lactam + H2O = a substituted beta-amino acid. Inhibited by the beta-lactamase-blocking agents sulbactam, tazobactam, avibactam and 3-aminophenylboronic acid (APB). Class C beta-lactamase which confers resistance to penicillins and cephalosporins. Has nitrocefin-, cefoxitin- and cefoperazone-hydrolyzing activities. The protein is Beta-lactamase CMY-2 of Klebsiella pneumoniae.